The primary structure comprises 244 residues: UPF0280 protein Mhun_0136 (244 aa).

It belongs to the UPF0280 family.

This chain is UPF0280 protein Mhun_0136, found in Methanospirillum hungatei JF-1 (strain ATCC 27890 / DSM 864 / NBRC 100397 / JF-1).